A 149-amino-acid chain; its full sequence is uncharacterized protein (149 aa).

One can recognise a HotDog ACOT-type domain in the interval 16–128 (PAGEPAIRVI…LFTFVAIDED (113 aa)).

It belongs to the acyl coenzyme A hydrolase family.

This is an uncharacterized protein from Zymomonas mobilis subsp. mobilis (strain ATCC 31821 / ZM4 / CP4).